The primary structure comprises 396 residues: Putative N(4)-(beta-N-acetylglucosaminyl)-L-asparaginase GG24090 (396 aa).

The N-terminal stretch at 1–23 is a signal peptide; that stretch reads MKRHLGTCLWVLCLASTAFSSLA. Disulfide bonds link C100–C105 and C199–C215. The active-site Nucleophile is the T246. Substrate-binding positions include 274–277 and 297–300; these read RVGD and TGDG. The cysteines at positions 357 and 384 are disulfide-linked.

This sequence belongs to the Ntn-hydrolase family. As to quaternary structure, heterotetramer of two alpha and two beta chains arranged as a dimer of alpha/beta heterodimers. Post-translationally, cleaved into an alpha and beta chain by autocatalysis; this activates the enzyme. The N-terminal residue of the beta subunit is responsible for the nucleophile hydrolase activity.

It catalyses the reaction N(4)-(beta-N-acetyl-D-glucosaminyl)-L-asparagine + H2O = N-acetyl-beta-D-glucosaminylamine + L-aspartate + H(+). Its function is as follows. Cleaves the GlcNAc-Asn bond which joins oligosaccharides to the peptide of asparagine-linked glycoproteins. In Drosophila erecta (Fruit fly), this protein is Putative N(4)-(beta-N-acetylglucosaminyl)-L-asparaginase GG24090.